The sequence spans 130 residues: Small ribosomal subunit protein uS8 (130 aa).

This sequence belongs to the universal ribosomal protein uS8 family.

The polypeptide is Small ribosomal subunit protein uS8 (RPS15A) (Strongylocentrotus purpuratus (Purple sea urchin)).